Here is a 447-residue protein sequence, read N- to C-terminus: Zinc finger protein ZIC 1 (447 aa).

The C2H2-type 1; atypical zinc finger occupies 225–260 (LICKWIEPEQLANPKKSCNKTFSTMHELVTHVTVEH). The segment at 269 to 296 (HICFWEECPREGKPFKAKYKLVNHIRVH) adopts a C2H2-type 2; atypical zinc-finger fold. C2H2-type zinc fingers lie at residues 302–326 (FPCP…KRTH), 332–356 (FKCE…MHVH), and 362–384 (YLCK…MKVH). The disordered stretch occupies residues 375 to 431 (SSLRKHMKVHESSSQGSQPSPAASSGYESSTPPTIVSPSTDNPTTSSLSPSSSAVHH). The span at 386 to 427 (SSSQGSQPSPAASSGYESSTPPTIVSPSTDNPTTSSLSPSSS) shows a compositional bias: low complexity.

It belongs to the GLI C2H2-type zinc-finger protein family. As to quaternary structure, interacts (via the C2H2-type domains 3, 4 and 5) with MDFIC (via the C2H2-type domains 3, 4 and 5). Interacts with GLI1; the interaction enhances transcription activation. Interacts with GLI2. Interacts with GLI3; the interaction enhances transcription activation. As to expression, CNS. A high level expression is seen in the cerebellum. Detected in the nuclei of the cerebellar granule cell lineage from the progenitor cells of the external germinal layer to the postmigrated cells of the internal granular layer. Detected in medulloblastoma (26/29 cases), but not present in all other tumors examined.

It localises to the nucleus. The protein resides in the cytoplasm. In terms of biological role, acts as a transcriptional activator. Involved in neurogenesis. Plays important roles in the early stage of organogenesis of the CNS, as well as during dorsal spinal cord development and maturation of the cerebellum. Involved in the spatial distribution of mossy fiber (MF) neurons within the pontine gray nucleus (PGN). Plays a role in the regulation of MF axon pathway choice. Promotes MF migration towards ipsilaterally-located cerebellar territories. May have a role in shear flow mechanotransduction in osteocytes. Retains nuclear GLI1 and GLI3 in the cytoplasm. Binds to the minimal GLI-consensus sequence 5'-TGGGTGGTC-3'. The polypeptide is Zinc finger protein ZIC 1 (ZIC1) (Homo sapiens (Human)).